The following is a 156-amino-acid chain: Small ribosomal subunit protein uS7c (156 aa).

The protein belongs to the universal ribosomal protein uS7 family. Part of the 30S ribosomal subunit.

The protein localises to the plastid. It localises to the chloroplast. Its function is as follows. One of the primary rRNA binding proteins, it binds directly to 16S rRNA where it nucleates assembly of the head domain of the 30S subunit. This is Small ribosomal subunit protein uS7c (rps7) from Pisum sativum (Garden pea).